The chain runs to 404 residues: Deoxyguanosinetriphosphate triphosphohydrolase-like protein (404 aa).

The disordered stretch occupies residues 1–33; that stretch reads MSVGMAAPRAAYGCDPDRSRGRQFAEPPSNNRS. Residues 69-217 form the HD domain; the sequence is RLTHSLEVAQ…AAIADDIAYD (149 aa).

This sequence belongs to the dGTPase family. Type 2 subfamily.

The sequence is that of Deoxyguanosinetriphosphate triphosphohydrolase-like protein from Rhodopseudomonas palustris (strain BisB5).